The following is a 118-amino-acid chain: RxLR effector protein PITG_19617 (118 aa).

A signal peptide spans methionine 1–alanine 21. The RxLR-dEER motif lies at arginine 50–glutamate 64.

Belongs to the RxLR effector family.

The protein resides in the secreted. The protein localises to the host nucleus. It localises to the host cytoplasm. Functionally, effector that enhances P.infestans colonization of Nicotiana benthamiana leaves. The protein is RxLR effector protein PITG_19617 of Phytophthora infestans (strain T30-4) (Potato late blight agent).